Reading from the N-terminus, the 93-residue chain is Pyrimidine/purine nucleoside phosphorylase (93 aa).

The protein belongs to the nucleoside phosphorylase PpnP family.

The enzyme catalyses a purine D-ribonucleoside + phosphate = a purine nucleobase + alpha-D-ribose 1-phosphate. It catalyses the reaction adenosine + phosphate = alpha-D-ribose 1-phosphate + adenine. It carries out the reaction cytidine + phosphate = cytosine + alpha-D-ribose 1-phosphate. The catalysed reaction is guanosine + phosphate = alpha-D-ribose 1-phosphate + guanine. The enzyme catalyses inosine + phosphate = alpha-D-ribose 1-phosphate + hypoxanthine. It catalyses the reaction thymidine + phosphate = 2-deoxy-alpha-D-ribose 1-phosphate + thymine. It carries out the reaction uridine + phosphate = alpha-D-ribose 1-phosphate + uracil. The catalysed reaction is xanthosine + phosphate = alpha-D-ribose 1-phosphate + xanthine. In terms of biological role, catalyzes the phosphorolysis of diverse nucleosides, yielding D-ribose 1-phosphate and the respective free bases. Can use uridine, adenosine, guanosine, cytidine, thymidine, inosine and xanthosine as substrates. Also catalyzes the reverse reactions. The protein is Pyrimidine/purine nucleoside phosphorylase of Magnetococcus marinus (strain ATCC BAA-1437 / JCM 17883 / MC-1).